The chain runs to 229 residues: Large ribosomal subunit protein uL1 (229 aa).

It belongs to the universal ribosomal protein uL1 family. Part of the 50S ribosomal subunit.

In terms of biological role, binds directly to 23S rRNA. The L1 stalk is quite mobile in the ribosome, and is involved in E site tRNA release. Protein L1 is also a translational repressor protein, it controls the translation of the L11 operon by binding to its mRNA. This Lacticaseibacillus casei (strain BL23) (Lactobacillus casei) protein is Large ribosomal subunit protein uL1.